Here is a 613-residue protein sequence, read N- to C-terminus: Zinc metalloproteinase-disintegrin-like atragin (613 aa).

A signal peptide spans 1-20 (MIQALLVIICLAVFPHQGSS). Residues 21–191 (IILESGNVND…DESIEKTSQL (171 aa)) constitute a propeptide that is removed on maturation. The Peptidase M12B domain occupies 205 to 400 (KYIEFYVVVD…DRPQCILNKP (196 aa)). Residues E208 and D292 each contribute to the Ca(2+) site. 2 disulfide bridges follow: C316–C395 and C356–C379. Positions 341, 345, and 351 each coordinate Zn(2+). The Ca(2+) site is built by C395, N398, I410, N413, F415, E417, E420, and D423. Residues 408–494 (PPICGNYFVE…ECPTDVFQRN (87 aa)) enclose the Disintegrin domain. Disulfide bonds link C411–C440, C422–C435, C424–C430, C434–C457, C448–C454, C453–C479, C466–C486, C473–C505, C498–C510, C517–C567, C532–C575, C542–C577, C545–C555, C562–C601, and C595–C606. The N-linked (GlcNAc...) asparagine glycan is linked to N436. The D/ECD-tripeptide motif lies at 472 to 474 (DCD). Ca(2+) is bound by residues D474, L475, E477, D489, and V490. The interval 560-574 (VKCGRLFCKRRNSMI) is hypervariable region that may play important roles toward cell migration.

Belongs to the venom metalloproteinase (M12B) family. P-III subfamily. P-IIIa sub-subfamily. As to quaternary structure, monomer. It depends on Zn(2+) as a cofactor. As to expression, expressed by the venom gland.

The protein localises to the secreted. Its function is as follows. Snake venom zinc metalloproteinase that seems to inhibit cell migration. This activity is dominated by the local structure of the hyper-variable region. The sequence is that of Zinc metalloproteinase-disintegrin-like atragin from Naja atra (Chinese cobra).